The following is a 339-amino-acid chain: tRNA N6-adenosine threonylcarbamoyltransferase (339 aa).

Fe cation is bound by residues His115 and His119. Residues 136–140, Asp168, Glu185, and Ser265 contribute to the substrate site; that span reads LISGG. Residue Asp293 coordinates Fe cation.

The protein belongs to the KAE1 / TsaD family. Fe(2+) is required as a cofactor.

The protein resides in the cytoplasm. The enzyme catalyses L-threonylcarbamoyladenylate + adenosine(37) in tRNA = N(6)-L-threonylcarbamoyladenosine(37) in tRNA + AMP + H(+). Its function is as follows. Required for the formation of a threonylcarbamoyl group on adenosine at position 37 (t(6)A37) in tRNAs that read codons beginning with adenine. Is probably involved in the transfer of the threonylcarbamoyl moiety of threonylcarbamoyl-AMP (TC-AMP) to the N6 group of A37. The protein is tRNA N6-adenosine threonylcarbamoyltransferase of Pyrobaculum calidifontis (strain DSM 21063 / JCM 11548 / VA1).